A 233-amino-acid chain; its full sequence is LexA repressor (233 aa).

Residues 26–46 (FDEMKDALDLRSKSGIHRLIT) constitute a DNA-binding region (H-T-H motif). Catalysis depends on for autocatalytic cleavage activity residues Ser-154 and Lys-192.

This sequence belongs to the peptidase S24 family. Homodimer.

It carries out the reaction Hydrolysis of Ala-|-Gly bond in repressor LexA.. Functionally, represses a number of genes involved in the response to DNA damage (SOS response), including recA and lexA. In the presence of single-stranded DNA, RecA interacts with LexA causing an autocatalytic cleavage which disrupts the DNA-binding part of LexA, leading to derepression of the SOS regulon and eventually DNA repair. This chain is LexA repressor, found in Nitrobacter winogradskyi (strain ATCC 25391 / DSM 10237 / CIP 104748 / NCIMB 11846 / Nb-255).